Here is a 115-residue protein sequence, read N- to C-terminus: MSDIIKRIEAEQMTKELPEFGPGDTVVVQVKVKEGSNERLQAYEGVVIAKKNRGLNSSFIVRKISHGVGVERTFQTYSPLVDSVEVKRRGDVRRAKLYYLRDLSGKAARIKEKVK.

Belongs to the bacterial ribosomal protein bL19 family.

Functionally, this protein is located at the 30S-50S ribosomal subunit interface and may play a role in the structure and function of the aminoacyl-tRNA binding site. The protein is Large ribosomal subunit protein bL19 of Hydrogenovibrio crunogenus (strain DSM 25203 / XCL-2) (Thiomicrospira crunogena).